The following is a 134-amino-acid chain: Agouti-related protein (134 aa).

Positions M1–G20 are cleaved as a signal peptide. The propeptide occupies A21–R84. Disulfide bonds link C89–C104, C96–C110, C103–C121, C107–C131, and C112–C119. One can recognise an Agouti domain in the interval C89–C131. The segment at R113–F115 is interaction with melanocortin receptors.

Interacts with melanocortin receptors MC3R, MC4R and MC5R.

The protein localises to the secreted. The protein resides in the golgi apparatus lumen. Its function is as follows. Plays a role in weight homeostasis. Involved in the control of feeding behavior through the central melanocortin system. Acts as alpha melanocyte-stimulating hormone antagonist by inhibiting cAMP production mediated by stimulation of melanocortin receptors within the hypothalamus and adrenal gland. Has very low activity with MC5R. Is an inverse agonist for MC3R and MC4R being able to suppress their constitutive activity. It promotes MC3R and MC4R endocytosis in an arrestin-dependent manner. This chain is Agouti-related protein (AGRP), found in Bos taurus (Bovine).